A 152-amino-acid chain; its full sequence is UPF0266 membrane protein YobD (152 aa).

Helical transmembrane passes span 6–26, 45–65, and 67–87; these read LVLILFIAALLVYALYDQFIM, VDSVIFVGLVAILIYNNVTSH, and AQMTTWLLSALALMGFYIFWI.

This sequence belongs to the UPF0266 family.

The protein resides in the cell inner membrane. This Salmonella paratyphi A (strain ATCC 9150 / SARB42) protein is UPF0266 membrane protein YobD.